The following is a 378-amino-acid chain: Tetraacyldisaccharide 4'-kinase (378 aa).

Residue 63-70 participates in ATP binding; that stretch reads AVGGAGKT.

It belongs to the LpxK family.

The catalysed reaction is a lipid A disaccharide + ATP = a lipid IVA + ADP + H(+). It functions in the pathway glycolipid biosynthesis; lipid IV(A) biosynthesis; lipid IV(A) from (3R)-3-hydroxytetradecanoyl-[acyl-carrier-protein] and UDP-N-acetyl-alpha-D-glucosamine: step 6/6. In terms of biological role, transfers the gamma-phosphate of ATP to the 4'-position of a tetraacyldisaccharide 1-phosphate intermediate (termed DS-1-P) to form tetraacyldisaccharide 1,4'-bis-phosphate (lipid IVA). The sequence is that of Tetraacyldisaccharide 4'-kinase from Anaeromyxobacter dehalogenans (strain 2CP-C).